The primary structure comprises 219 residues: MTNILIVEDEQNLARFLELELTHDNYSVDIEYEGQAGLDKALSNNYDLIILDLMLPNINGLEICRRVRQEQSTPIIIITAKSDTYDKVTGLDYGADDYIVKPFEIEELFARIRAVLRRQPQKDIIDINGIKIDVDAFNVTINGEQLDFTKTEYDLLYLLATNRNRVLQREQILDHVWGYDSEVETNVVDVYIRYLRNKLKPYGKDKTIETVRGVGYVIR.

In terms of domain architecture, Response regulatory spans 3 to 116 (NILIVEDEQN…ELFARIRAVL (114 aa)). 4-aspartylphosphate is present on aspartate 52. The segment at residues 122 to 219 (KDIIDINGIK…TVRGVGYVIR (98 aa)) is a DNA-binding region (ompR/PhoB-type).

In terms of processing, phosphorylated by ArlS.

It localises to the cytoplasm. Member of the two-component regulatory system ArlS/ArlR. The polypeptide is Response regulator ArlR (arlR) (Staphylococcus haemolyticus (strain JCSC1435)).